An 817-amino-acid polypeptide reads, in one-letter code: DNA replication licensing factor Mcm6 (817 aa).

A C4-type zinc finger spans residues 152–179 (CLDCQTEIRNVEQQFKFTNPTICRNPVC). Positions 338–544 (LYQNLISSLF…VVDYAIARKI (207 aa)) constitute an MCM domain. The ATP site is built by S391, T392, A393, K394, S395, and N496. The Arginine finger motif lies at 520 to 523 (SRFD). ADP-binding residues include R611 and E614.

Belongs to the MCM family. In terms of assembly, component of the Mcm2-7 complex. The complex forms a toroidal hexameric ring with the proposed subunit order Mcm2-Mcm6-Mcm4-Mcm7-Mcm3-Mcm5. The heterodimers of Mcm4/Mcm6 and Mcm3/Mcm5 interact with Mcm2 and Mcm7. In terms of tissue distribution, in stage 12 embryos, strongly expressed in the CNS and weakly in the gut.

The protein localises to the nucleus. The catalysed reaction is ATP + H2O = ADP + phosphate + H(+). In terms of biological role, acts as a component of the Mcm2-7 complex (Mcm complex) which is the putative replicative helicase essential for 'once per cell cycle' DNA replication initiation and elongation in eukaryotic cells. Core component of CDC45-MCM-GINS (CMG) helicase, the molecular machine that unwinds template DNA during replication, and around which the replisome is built. The active ATPase sites in the Mcm2-7 ring are formed through the interaction surfaces of two neighboring subunits such that a critical structure of a conserved arginine finger motif is provided in trans relative to the ATP-binding site of the Walker A box of the adjacent subunit. The six ATPase active sites, however, are likely to contribute differentially to the complex helicase activity Required for DNA replication and cell proliferation. Required for mitotic cycles, endocycles, and the special S phase associated with the amplification of chorion genes; has a role in origin unwinding or fork elongation at chorion loci. In Drosophila melanogaster (Fruit fly), this protein is DNA replication licensing factor Mcm6.